A 316-amino-acid chain; its full sequence is Apolipoprotein E (316 aa).

The signal sequence occupies residues 1–18 (MKALWAVLVVTLLAGCLA). 8 repeat units span residues 76 to 97 (VLME…EQMG), 98 to 119 (PMAE…SRLG), 120 to 141 (ADME…TMLG), 142 to 163 (QSTE…KRLM), 164 to 185 (RDAE…EGAE), 186 to 207 (RGVG…QRTA), 208 to 229 (NLGA…ARIR), and 230 to 251 (GRLE…EQME). Positions 76–251 (VLMEDTMTEL…RLEEVREQME (176 aa)) are 8 X 22 AA approximate tandem repeats. Methionine sulfoxide is present on Met139. Position 143 is a phosphoserine (Ser143). Positions 154 to 164 (HLRKLRKRLMR) are LDL and other lipoprotein receptors binding. A heparin-binding site is contributed by 158 to 161 (LRKR). A lipid-binding and lipoprotein association region spans residues 206–286 (TANLGAGAAQ…GWFEPLVEDM (81 aa)). 225-232 (GARIRGRL) is a binding site for heparin. The interval 262–316 (QQMRLQAEIFQTRLKGWFEPLVEDMQRQWANLMEKIQASVATNPIPPSSVPQESQ) is homooligomerization. Residues 274–286 (RLKGWFEPLVEDM) are specificity for association with VLDL.

The protein belongs to the apolipoprotein A1/A4/E family. Homotetramer. May interact with ABCA1; functionally associated with ABCA1 in the biogenesis of HDLs. May interact with APP/A4 amyloid-beta peptide; the interaction is extremely stable in vitro but its physiological significance is unclear. May interact with MAPT. May interact with MAP2. In the cerebrospinal fluid, interacts with secreted SORL1. Interacts with PMEL; this allows the loading of PMEL luminal fragment on ILVs to induce fibril nucleation. Post-translationally, APOE exists as multiple glycosylated and sialylated glycoforms within cells and in plasma. The extent of glycosylation and sialylation are tissue and context specific. Glycated in plasma VLDL. In terms of processing, phosphorylated by FAM20C in the extracellular medium.

The protein resides in the secreted. Its subcellular location is the extracellular space. It is found in the extracellular matrix. The protein localises to the extracellular vesicle. It localises to the endosome. The protein resides in the multivesicular body. In terms of biological role, APOE is an apolipoprotein, a protein associating with lipid particles, that mainly functions in lipoprotein-mediated lipid transport between organs via the plasma and interstitial fluids. APOE is a core component of plasma lipoproteins and is involved in their production, conversion and clearance. Apolipoproteins are amphipathic molecules that interact both with lipids of the lipoprotein particle core and the aqueous environment of the plasma. As such, APOE associates with chylomicrons, chylomicron remnants, very low density lipoproteins (VLDL) and intermediate density lipoproteins (IDL) but shows a preferential binding to high-density lipoproteins (HDL). It also binds a wide range of cellular receptors including the LDL receptor/LDLR, the LDL receptor-related proteins LRP1, LRP2 and LRP8 and the very low-density lipoprotein receptor/VLDLR that mediate the cellular uptake of the APOE-containing lipoprotein particles. Finally, APOE also has a heparin-binding activity and binds heparan-sulfate proteoglycans on the surface of cells, a property that supports the capture and the receptor-mediated uptake of APOE-containing lipoproteins by cells. A main function of APOE is to mediate lipoprotein clearance through the uptake of chylomicrons, VLDLs, and HDLs by hepatocytes. APOE is also involved in the biosynthesis by the liver of VLDLs as well as their uptake by peripheral tissues ensuring the delivery of triglycerides and energy storage in muscle, heart and adipose tissues. By participating in the lipoprotein-mediated distribution of lipids among tissues, APOE plays a critical role in plasma and tissues lipid homeostasis. APOE is also involved in two steps of reverse cholesterol transport, the HDLs-mediated transport of cholesterol from peripheral tissues to the liver, and thereby plays an important role in cholesterol homeostasis. First, it is functionally associated with ABCA1 in the biogenesis of HDLs in tissues. Second, it is enriched in circulating HDLs and mediates their uptake by hepatocytes. APOE also plays an important role in lipid transport in the central nervous system, regulating neuron survival and sprouting. The sequence is that of Apolipoprotein E (APOE) from Microtus ochrogaster (Prairie vole).